The sequence spans 384 residues: S-adenosylmethionine synthase (384 aa).

H16 is a binding site for ATP. A Mg(2+)-binding site is contributed by D18. E44 contacts K(+). Residues E57 and Q100 each coordinate L-methionine. A flexible loop region spans residues 100 to 110 (QSADIAMGVDE). Residues 165 to 167 (DAK), D240, 246 to 247 (RK), A263, and K267 contribute to the ATP site. Position 240 (D240) interacts with L-methionine. An L-methionine-binding site is contributed by K271.

This sequence belongs to the AdoMet synthase family. As to quaternary structure, homotetramer; dimer of dimers. It depends on Mg(2+) as a cofactor. K(+) serves as cofactor.

Its subcellular location is the cytoplasm. It carries out the reaction L-methionine + ATP + H2O = S-adenosyl-L-methionine + phosphate + diphosphate. It functions in the pathway amino-acid biosynthesis; S-adenosyl-L-methionine biosynthesis; S-adenosyl-L-methionine from L-methionine: step 1/1. In terms of biological role, catalyzes the formation of S-adenosylmethionine (AdoMet) from methionine and ATP. The overall synthetic reaction is composed of two sequential steps, AdoMet formation and the subsequent tripolyphosphate hydrolysis which occurs prior to release of AdoMet from the enzyme. In Cellvibrio japonicus (strain Ueda107) (Pseudomonas fluorescens subsp. cellulosa), this protein is S-adenosylmethionine synthase.